A 351-amino-acid chain; its full sequence is MTQEILGEVQTGKIPLKGRTLKELSEIMVSLGEKSFRAKQIYHGLYVNRYESWEQFTTFSKTLKEKLEGLCSLTQLTVVKHLKSVDGTQKFTFASEQGKEFEAVWIPSGDGGRKTICISSQVGCTLNCKFCATAKLEFQGNLKAHEIVDQVLQVEKIVGDNATNVVFMGMGEPFHNYFNVIRAASILHDPDALNLGAKRITISTSGVVNGIRRFIENKEPYNFAISLNHPDPNGRLQIMDIEEKFALSELLQAAKDFTRELKRRITFEYVMIPGVSMGPENANKLVKIARSLDCKINVIPLNTEFFGWRRPTKQEVAEFITLLEPAGVPILNRRSPGKDIFGACGMLASKS.

Catalysis depends on glutamate 102, which acts as the Proton acceptor. The Radical SAM core domain maps to aspartate 110–aspartate 339. A disulfide bridge links cysteine 117 with cysteine 344. [4Fe-4S] cluster-binding residues include cysteine 124, cysteine 128, and cysteine 131. S-adenosyl-L-methionine contacts are provided by residues glycine 171 to glutamate 172, serine 203, serine 226 to asparagine 228, and asparagine 302. Residue cysteine 344 is the S-methylcysteine intermediate of the active site.

Belongs to the radical SAM superfamily. RlmN family. [4Fe-4S] cluster is required as a cofactor.

It localises to the cytoplasm. It catalyses the reaction adenosine(2503) in 23S rRNA + 2 reduced [2Fe-2S]-[ferredoxin] + 2 S-adenosyl-L-methionine = 2-methyladenosine(2503) in 23S rRNA + 5'-deoxyadenosine + L-methionine + 2 oxidized [2Fe-2S]-[ferredoxin] + S-adenosyl-L-homocysteine. It carries out the reaction adenosine(37) in tRNA + 2 reduced [2Fe-2S]-[ferredoxin] + 2 S-adenosyl-L-methionine = 2-methyladenosine(37) in tRNA + 5'-deoxyadenosine + L-methionine + 2 oxidized [2Fe-2S]-[ferredoxin] + S-adenosyl-L-homocysteine. In terms of biological role, specifically methylates position 2 of adenine 2503 in 23S rRNA and position 2 of adenine 37 in tRNAs. The chain is Probable dual-specificity RNA methyltransferase RlmN from Leptospira borgpetersenii serovar Hardjo-bovis (strain JB197).